We begin with the raw amino-acid sequence, 216 residues long: Sperm microtubule inner protein 8 (216 aa).

As to quaternary structure, microtubule inner protein component of sperm flagellar doublet microtubules. Expressed in testis.

It localises to the cytoplasm. Its subcellular location is the cytoskeleton. It is found in the flagellum axoneme. Microtubule inner protein (MIP) part of the dynein-decorated doublet microtubules (DMTs) in flagellum axoneme. May serve to reinforce and thus stabilize the microtubule structure in the sperm flagella. This chain is Sperm microtubule inner protein 8 (Spmip8), found in Mus musculus (Mouse).